A 213-amino-acid chain; its full sequence is Histone H1 (213 aa).

The segment covering 1–25 (MAAATASAAATPAKKAAPKKPAAAP) has biased composition (low complexity). Disordered regions lie at residues 1–30 (MAAA…HPSY) and 81–213 (GEFV…AKSS). Residues 26–97 (EHPSYKEMLT…GPSGTVKLAK (72 aa)) form the H15 domain. 4 stretches are compositionally biased toward low complexity: residues 102–113 (AAAPKKPAAKKA), 123–137 (KKAA…PKSA), 157–176 (KKAA…APVK), and 203–213 (PKKAATPAKSS).

It belongs to the histone H1/H5 family.

Its subcellular location is the nucleus. The protein localises to the chromosome. In terms of biological role, could act as an H1-type linker histone. In Ascobolus immersus, this protein is Histone H1.